The sequence spans 363 residues: Flagellar P-ring protein (363 aa).

Residues 1-20 form the signal peptide; that stretch reads MKKLTLVLFGMLFLASSAHA.

The protein belongs to the FlgI family. The basal body constitutes a major portion of the flagellar organelle and consists of four rings (L,P,S, and M) mounted on a central rod.

It is found in the periplasm. Its subcellular location is the bacterial flagellum basal body. Functionally, assembles around the rod to form the L-ring and probably protects the motor/basal body from shearing forces during rotation. This Vibrio atlanticus (strain LGP32) (Vibrio splendidus (strain Mel32)) protein is Flagellar P-ring protein.